A 128-amino-acid polypeptide reads, in one-letter code: KHDC1-like protein (128 aa).

The protein belongs to the KHDC1 family.

The sequence is that of KHDC1-like protein (KHDC1L) from Homo sapiens (Human).